A 65-amino-acid chain; its full sequence is Large ribosomal subunit protein bL35 (65 aa).

This sequence belongs to the bacterial ribosomal protein bL35 family.

This is Large ribosomal subunit protein bL35 from Desulfitobacterium hafniense (strain DSM 10664 / DCB-2).